Reading from the N-terminus, the 368-residue chain is tRNA-specific 2-thiouridylase MnmA (368 aa).

ATP is bound by residues 11 to 18 (GMSGGVDS) and Met-37. The segment at 97–99 (NPD) is interaction with target base in tRNA. The active-site Nucleophile is Cys-102. Cys-102 and Cys-199 are oxidised to a cystine. Position 127 (Gly-127) interacts with ATP. The segment at 149–151 (KDQ) is interaction with tRNA. Catalysis depends on Cys-199, which acts as the Cysteine persulfide intermediate. Residues 311–312 (RY) are interaction with tRNA.

It belongs to the MnmA/TRMU family. As to quaternary structure, interacts with TusE.

The protein localises to the cytoplasm. The enzyme catalyses S-sulfanyl-L-cysteinyl-[protein] + uridine(34) in tRNA + AH2 + ATP = 2-thiouridine(34) in tRNA + L-cysteinyl-[protein] + A + AMP + diphosphate + H(+). Functionally, catalyzes the 2-thiolation of uridine at the wobble position (U34) of tRNA(Lys), tRNA(Glu) and tRNA(Gln), leading to the formation of s(2)U34, the first step of tRNA-mnm(5)s(2)U34 synthesis. Sulfur is provided by IscS, via a sulfur-relay system. Binds ATP and its substrate tRNAs. The sequence is that of tRNA-specific 2-thiouridylase MnmA from Shigella dysenteriae serotype 1 (strain Sd197).